Consider the following 221-residue polypeptide: Large ribosomal subunit protein uL4 (221 aa).

A disordered region spans residues Ala45–Gln100.

Belongs to the universal ribosomal protein uL4 family. Part of the 50S ribosomal subunit.

Its function is as follows. One of the primary rRNA binding proteins, this protein initially binds near the 5'-end of the 23S rRNA. It is important during the early stages of 50S assembly. It makes multiple contacts with different domains of the 23S rRNA in the assembled 50S subunit and ribosome. Functionally, forms part of the polypeptide exit tunnel. This Leifsonia xyli subsp. xyli (strain CTCB07) protein is Large ribosomal subunit protein uL4.